A 1068-amino-acid chain; its full sequence is Rho family-interacting cell polarization regulator 2 (1068 aa).

Residues S21 and S37 each carry the phosphoserine; in isoform modification. Residues 45-73 are disordered; that stretch reads LKKPQAKLKKMHNLGHKNNNPPKEPQPKR. The segment covering 48 to 59 has biased composition (basic residues); sequence PQAKLKKMHNLG. The involved in cell filopodia formation stretch occupies residues 55–113; the sequence is MHNLGHKNNNPPKEPQPKRVEEVYRALKNGLDEYLEVHQTELDKLTAQLKDMKRNSRLG. Residues 83–112 adopt a coiled-coil conformation; sequence NGLDEYLEVHQTELDKLTAQLKDMKRNSRL. S341 carries the post-translational modification Phosphoserine; in isoform 2. Polar residues predominate over residues 474–491; it reads QNEGMDDTSSASSRNSLG. The segment at 474–524 is disordered; sequence QNEGMDDTSSASSRNSLGEGQEPKSHLKEEDPEEPRKPASAPSEACRRQSS. The span at 494-510 shows a compositional bias: basic and acidic residues; sequence QEPKSHLKEEDPEEPRK. S523 carries the phosphoserine; in isoform 2 modification. S573 is modified (phosphoserine). At S585 the chain carries Phosphoserine; in isoform 2. A coiled-coil region spans residues 768-793; that stretch reads VARSLLEKLSRQIQVMEKLAAVSDEN.

It belongs to the RIPOR family. As to quaternary structure, homooligomer; homooligomerization is regulated by RHOC and leads to the formation of concatemers through the association of N- and C-termini. Interacts with 14-3-3 proteins; these interactions occur during myogenic cell differentiation. Interacts with HDAC6; this interaction occurs during early myogenic differentiation and prevents HDAC6 to deacetylate tubulin. Interacts with DYSF; this interaction occurs during early myogenic differentiation. Interacts with MYOF. Interacts with RHOC. Isoform 1 and isoform 2 interact (via active GTP- or inactive GDP-bound forms) with RHOA; these interactions are direct, block the loading of GTP to RHOA and decrease upon chemokine CCL19 stimulation in primary T lymphocytes. Isoform 2 interacts (phosphorylated form) with HDAC6; this interaction induces T cell proliferation arrest. Isoform 2 interacts (phosphorylated form) with 14-3-3 proteins; these interactions induces T cell proliferation arrest. Isoform 2 interacts with 14-3-3 proteins. Isoform 2 interacts (via phosphorylated form) with YWHAB; this interaction occurs in a chemokine-dependent manner and does not compete for binding of RIPOR2 with RHOA nor blocks inhibition of RIPOR2-mediated RHOA activity. Isoform 2 interacts with YWHAE. Isoform 2 interacts with YWHAQ. In terms of processing, phosphorylated. Isoform 2 is phosphorylated in T cells. Chemokine-induced phosphorylation of isoform 2 in neutrophils occurs in a PKC- and AKT-dependent manner, resulting in RIPOR2 interaction with YWHAB and stabilization. Isoform 2 is phosphorylated by PKCA, AKT1 and MAPKAPK1A; in vitro. Post-translationally, acetylated during myogenic differentiation. As to expression, expressed in primary fetal mononuclear myoblast. Expressed strongly in naive T lymphocytes. Expressed weakly in activated T lymphocytes (at protein level). Expressed in blood cells and adult tissues of hematopoietic origin, such as the secondary lymphoid organs. Expressed in cytotrophoblast.

Its subcellular location is the cytoplasm. The protein resides in the cytoskeleton. It is found in the cell projection. The protein localises to the filopodium. It localises to the stereocilium. Its subcellular location is the stereocilium membrane. The protein resides in the apical cell membrane. Acts as an inhibitor of the small GTPase RHOA and plays several roles in the regulation of myoblast and hair cell differentiation, lymphocyte T proliferation and neutrophil polarization. Inhibits chemokine-induced T lymphocyte responses, such as cell adhesion, polarization and migration. Involved also in the regulation of neutrophil polarization, chemotaxis and adhesion. Required for normal development of inner and outer hair cell stereocilia within the cochlea of the inner ear. Plays a role for maintaining the structural organization of the basal domain of stereocilia. Involved in mechanosensory hair cell function. Required for normal hearing. Its function is as follows. Acts as an inhibitor of the small GTPase RHOA. Plays a role in fetal mononuclear myoblast differentiation by promoting filopodia and myotube formation. Maintains naive T lymphocytes in a quiescent state. The chain is Rho family-interacting cell polarization regulator 2 (RIPOR2) from Homo sapiens (Human).